The chain runs to 130 residues: MAATVKKTGSKKSKRNVPNGVVHIQSTFNNTIVSISDTSGHVISWSSAGASGFKGARKGTPFAAQTAAEAAARRALDQGMRQIEVLVRGPGAGRETAIRALQVAGLEITLIRDVTPLPHNGCRRPKRRRV.

This sequence belongs to the universal ribosomal protein uS11 family. Part of the 30S ribosomal subunit. Interacts with proteins S7 and S18. Binds to IF-3.

In terms of biological role, located on the platform of the 30S subunit, it bridges several disparate RNA helices of the 16S rRNA. Forms part of the Shine-Dalgarno cleft in the 70S ribosome. This is Small ribosomal subunit protein uS11 from Prochlorococcus marinus (strain MIT 9215).